Reading from the N-terminus, the 870-residue chain is Rho GTPase-activating protein 7 (870 aa).

A PH domain is found at 18–125 (TVFKSGPLFI…WKTALEQALA (108 aa)). A Rho-GAP domain is found at 167–367 (LALEDIDGSP…VLLEDYGSIF (201 aa)). Disordered stretches follow at residues 378-432 (STES…SGCT) and 446-465 (DSDI…SNIR). Acidic residues predominate over residues 407–417 (NEVEPVTDDDN). Residues 569–693 (GEDELAIQRL…HQLNQQRQTH (125 aa)) adopt a coiled-coil conformation. Positions 736–793 (HEENVLGAEWRNSKGAGSFGVGNSRQPSRKQIPESTNTTDSKISEESGKISVDKLSSI) are disordered. Positions 777 to 787 (KISEESGKISV) are enriched in basic and acidic residues.

Acts as a GTPase activator for the Rac-type GTPase by converting it to an inactive GDP-bound state. In Arabidopsis thaliana (Mouse-ear cress), this protein is Rho GTPase-activating protein 7 (ROPGAP7).